The following is a 546-amino-acid chain: Calnexin homolog (546 aa).

The signal sequence occupies residues 1 to 25 (MGERKGIPMALGLLAMILFFIASSS). Topologically, residues 26–475 (SHLVRASDDA…EKAEKQPNLT (450 aa)) are lumenal. Positions 43 and 74 each coordinate Ca(2+). Cysteines 117 and 152 form a disulfide. The an alpha-D-glucoside site is built by Tyr121, Lys123, Tyr143, and Asp150. Residues 217-329 (LSSEDFEPPL…PGCGEWKRPT (113 aa)) form a disordered region. The tract at residues 232–365 (IPDPDDKKPE…REIPNPEYFE (134 aa)) is p domain (Extended arm). The span at 233 to 249 (PDPDDKKPEDWDERAKI) shows a compositional bias: basic and acidic residues. 5 consecutive repeat copies span residues 234–245 (DPDDKKPEDWDE), 251–262 (DPSAVKPDDWDE), 270–281 (DEEAEKPEGWLD), 289–300 (DPEATKPEDWDD), and 304–314 (GEWEAPKIENP). 2 4 X approximate repeats regions span residues 234–300 (DPDD…DWDD) and 304–361 (GEWE…IPNP). Acidic residues-rich tracts occupy residues 259 to 290 (DWDEDAPMEILDEEAEKPEGWLDDEPEEIDDP) and 297 to 306 (DWDDEEDGEW). Cys316 and Cys322 are oxidised to a cystine. 3 repeat units span residues 323-333 (GEWKRPTKRNP), 337-347 (GKWSAPYIDNP), and 351-361 (GIWKPREIPNP). Glu380 is an an alpha-D-glucoside binding site. Asp391 contacts Ca(2+). The N-linked (GlcNAc...) asparagine glycan is linked to Asn473. The helical transmembrane segment at 476-496 (IGILVAVVVVFVSIFFRLIFG) threads the bilayer. The Cytoplasmic segment spans residues 497-546 (GKKPAKVEKKPERTEASNNQGSGENEENKEKEKQKEEASNAARRRPRRET). Composition is skewed to basic and acidic residues over residues 501–511 (AKVEKKPERTE) and 522–534 (EENKEKEKQKEEA). Residues 501 to 546 (AKVEKKPERTEASNNQGSGENEENKEKEKQKEEASNAARRRPRRET) form a disordered region.

The protein belongs to the calreticulin family.

Its subcellular location is the endoplasmic reticulum membrane. Calcium-binding protein that interacts with newly synthesized monoglucosylated glycoproteins in the endoplasmic reticulum. It may act in assisting protein assembly and/or in the retention within the ER of unassembled protein subunits. It seems to play a major role in the quality control apparatus of the ER by the retention of incorrectly folded proteins. The protein is Calnexin homolog of Glycine max (Soybean).